We begin with the raw amino-acid sequence, 86 residues long: Co-chaperonin GroES (86 aa).

Belongs to the GroES chaperonin family. As to quaternary structure, heptamer of 7 subunits arranged in a ring. Interacts with the chaperonin GroEL.

The protein localises to the cytoplasm. Its function is as follows. Together with the chaperonin GroEL, plays an essential role in assisting protein folding. The GroEL-GroES system forms a nano-cage that allows encapsulation of the non-native substrate proteins and provides a physical environment optimized to promote and accelerate protein folding. GroES binds to the apical surface of the GroEL ring, thereby capping the opening of the GroEL channel. The sequence is that of Co-chaperonin GroES from Campylobacter concisus (strain 13826).